The following is a 535-amino-acid chain: Phosphoenolpyruvate carboxykinase (ATP) (535 aa).

Substrate contacts are provided by Arg-59, Tyr-201, and Lys-207. Residues Lys-207, His-226, and 243 to 251 (GLSGTGKTT) each bind ATP. Mn(2+)-binding residues include Lys-207 and His-226. Asp-264 contributes to the Mn(2+) binding site. Residues Glu-292, Arg-328, 444-445 (RI), and Thr-450 each bind ATP. Arg-328 contributes to the substrate binding site.

It belongs to the phosphoenolpyruvate carboxykinase (ATP) family. Requires Mn(2+) as cofactor.

It localises to the cytoplasm. It carries out the reaction oxaloacetate + ATP = phosphoenolpyruvate + ADP + CO2. The protein operates within carbohydrate biosynthesis; gluconeogenesis. In terms of biological role, involved in the gluconeogenesis. Catalyzes the conversion of oxaloacetate (OAA) to phosphoenolpyruvate (PEP) through direct phosphoryl transfer between the nucleoside triphosphate and OAA. The chain is Phosphoenolpyruvate carboxykinase (ATP) from Bacteroides fragilis (strain ATCC 25285 / DSM 2151 / CCUG 4856 / JCM 11019 / LMG 10263 / NCTC 9343 / Onslow / VPI 2553 / EN-2).